A 440-amino-acid polypeptide reads, in one-letter code: Armadillo-like helical domain containing protein 1 (440 aa).

The protein is Armadillo-like helical domain containing protein 1 of Homo sapiens (Human).